An 89-amino-acid chain; its full sequence is Small ribosomal subunit protein uS14A (89 aa).

The protein belongs to the universal ribosomal protein uS14 family. Part of the 30S ribosomal subunit. Contacts proteins S3 and S10.

Functionally, binds 16S rRNA, required for the assembly of 30S particles and may also be responsible for determining the conformation of the 16S rRNA at the A site. This Levilactobacillus brevis (strain ATCC 367 / BCRC 12310 / CIP 105137 / JCM 1170 / LMG 11437 / NCIMB 947 / NCTC 947) (Lactobacillus brevis) protein is Small ribosomal subunit protein uS14A.